A 173-amino-acid chain; its full sequence is Alpha-crystallin A chain (173 aa).

M1 bears the N-acetylmethionine mark. The tract at residues 1 to 63 (MDIAIQHPWF…RTVLDSGISE (63 aa)) is required for complex formation with BFSP1 and BFSP2. Deamidated glutamine; partial is present on Q6. S45 is subject to Phosphoserine. Q50 is modified (deamidated glutamine; partial). The sHSP domain maps to 52–162 (LFRTVLDSGI…GHSERAIPVS (111 aa)). K70 is modified (N6-acetyllysine). Q90 bears the Deamidated glutamine; partial mark. K99 is subject to N6-acetyllysine. Position 100 (H100) interacts with Zn(2+). N101 is modified (deamidated asparagine; partial). Zn(2+) is bound by residues E102 and H107. A Phosphoserine modification is found at S122. Position 123 is a deamidated asparagine; partial (N123). Positions 144–173 (PKVPSGLDAGHSERAIPVSREEKPSSAPSS) are disordered. Over residues 153–167 (GHSERAIPVSREEKP) the composition is skewed to basic and acidic residues. Zn(2+) is bound at residue H154. An O-linked (GlcNAc) serine glycan is attached at S162.

The protein belongs to the small heat shock protein (HSP20) family. As to quaternary structure, heteromer composed of three CRYAA and one CRYAB subunits. Inter-subunit bridging via zinc ions enhances stability, which is crucial as there is no protein turn over in the lens. Can also form homodimers and homotetramers (dimers of dimers) which serve as the building blocks of homooligomers. Within homooligomers, the zinc-binding motif is created from residues of 3 different molecules. His-100 and Glu-102 from one molecule are ligands of the zinc ion, and His-107 and His-154 residues from additional molecules complete the site with tetrahedral coordination geometry. Part of a complex required for lens intermediate filament formation composed of BFSP1, BFSP2 and CRYAA. Acetylation at Lys-70 may increase chaperone activity. Post-translationally, undergoes age-dependent proteolytical cleavage at the C-terminus.

Its subcellular location is the cytoplasm. The protein localises to the nucleus. Functionally, contributes to the transparency and refractive index of the lens. Acts as a chaperone, preventing aggregation of various proteins under a wide range of stress conditions. Required for the correct formation of lens intermediate filaments as part of a complex composed of BFSP1, BFSP2 and CRYAA. The polypeptide is Alpha-crystallin A chain (CRYAA) (Tapirus indicus (Asiatic tapir)).